The chain runs to 715 residues: uncharacterized protein (715 aa).

Disordered stretches follow at residues 192-216, 300-348, 461-481, and 580-630; these read ASSV…SVTA, NEEV…TSKR, ASSS…RSNE, and FTVS…KPPK. Residues 202–213 are compositionally biased toward low complexity; the sequence is NNTSPYPPSNSS. Polar residues-rich tracts occupy residues 301 to 326 and 472 to 481; these read EEVS…NKND and HLGTSLRSNE. The segment covering 601–614 has biased composition (low complexity); that stretch reads TDSSPSDTISSSPT.

This is an uncharacterized protein from Schizosaccharomyces pombe (strain 972 / ATCC 24843) (Fission yeast).